The sequence spans 190 residues: Ubiquinol-cytochrome c reductase iron-sulfur subunit (190 aa).

The chain crosses the membrane as a helical span at residues 18–39 (FLYYATAGAGTVAAGAAAWTLV). A Rieske domain is found at 95–188 (GQLIDRSAQN…AEFLDDTTIK (94 aa)). [2Fe-2S] cluster-binding residues include Cys132, His134, Cys152, and His155. Cys137 and Cys154 are joined by a disulfide.

This sequence belongs to the Rieske iron-sulfur protein family. The main subunits of complex b-c1 are: cytochrome b, cytochrome c1 and the Rieske protein. The cofactor is [2Fe-2S] cluster.

It localises to the cell membrane. It carries out the reaction a quinol + 2 Fe(III)-[cytochrome c](out) = a quinone + 2 Fe(II)-[cytochrome c](out) + 2 H(+)(out). Component of the ubiquinol-cytochrome c reductase complex (complex III or cytochrome b-c1 complex), which is a respiratory chain that generates an electrochemical potential coupled to ATP synthesis. In Paracoccus denitrificans, this protein is Ubiquinol-cytochrome c reductase iron-sulfur subunit (petA).